A 408-amino-acid chain; its full sequence is Putative polysaccharide ligase RBE_0399 (408 aa).

10 helical membrane passes run 5–25 (FFIF…AATV), 72–92 (MTIK…LFAI), 94–114 (PINS…GFVV), 130–150 (LIFG…SYGF), 163–183 (MLDR…AILI), 192–212 (LILY…ASFL), 230–250 (IFSK…PIIA), 325–345 (ILQI…SLVY), 359–377 (FRAS…GMIS), and 380–400 (VWQI…KLLV).

Belongs to the O-antigen ligase family.

It localises to the membrane. This is Putative polysaccharide ligase RBE_0399 (rfaL) from Rickettsia bellii (strain RML369-C).